A 507-amino-acid chain; its full sequence is Maturase K (507 aa).

It belongs to the intron maturase 2 family. MatK subfamily.

It localises to the plastid. It is found in the chloroplast. Usually encoded in the trnK tRNA gene intron. Probably assists in splicing its own and other chloroplast group II introns. The polypeptide is Maturase K (Calocedrus decurrens (California incense-cedar)).